Here is a 694-residue protein sequence, read N- to C-terminus: Elongation factor G 2 (694 aa).

The region spanning 8–282 (TAIRNIGIMA…AVVSYLPSPL (275 aa)) is the tr-type G domain. Residues 17-24 (AHIDAGKT), 81-85 (DTPGH), and 135-138 (NKMD) each bind GTP.

It belongs to the TRAFAC class translation factor GTPase superfamily. Classic translation factor GTPase family. EF-G/EF-2 subfamily.

It localises to the cytoplasm. Catalyzes the GTP-dependent ribosomal translocation step during translation elongation. During this step, the ribosome changes from the pre-translocational (PRE) to the post-translocational (POST) state as the newly formed A-site-bound peptidyl-tRNA and P-site-bound deacylated tRNA move to the P and E sites, respectively. Catalyzes the coordinated movement of the two tRNA molecules, the mRNA and conformational changes in the ribosome. The sequence is that of Elongation factor G 2 from Syntrophomonas wolfei subsp. wolfei (strain DSM 2245B / Goettingen).